We begin with the raw amino-acid sequence, 140 residues long: MPPKAAEKKPSTGGKAPAGKAPAEKKEAGKKTAAAATGDKKKRGKTRKETYSSYIYKVLKQVHPDTGISTRAMSILNSFVNDIFERVATEASKLAAYNKKSTISSREIQTSVRLILPGELAKHAVSEGTKAVTKYSSSAK.

Residues Met-1 to Pro-10 are compositionally biased toward basic and acidic residues. The tract at residues Met-1–Lys-48 is disordered. Residues Lys-8 and Lys-9 each carry the N6-acetyllysine; alternate modification. Glycyl lysine isopeptide (Lys-Gly) (interchain with G-Cter in SUMO); alternate cross-links involve residues Lys-8 and Lys-9. Residues Ser-11–Ala-21 are compositionally biased toward low complexity. Lys-15 is modified (N6-acetyllysine). Position 25 is an N6-acetyllysine; alternate (Lys-25). Lys-25 is covalently cross-linked (Glycyl lysine isopeptide (Lys-Gly) (interchain with G-Cter in SUMO); alternate). Lys-26 is covalently cross-linked (Glycyl lysine isopeptide (Lys-Gly) (interchain with G-Cter in SUMO)). Lys-134 participates in a covalent cross-link: Glycyl lysine isopeptide (Lys-Gly) (interchain with G-Cter in ubiquitin).

Belongs to the histone H2B family. The nucleosome is a histone octamer containing two molecules each of H2A, H2B, H3 and H4 assembled in one H3-H4 heterotetramer and two H2A-H2B heterodimers. The octamer wraps approximately 147 bp of DNA. Post-translationally, monoubiquitinated by the ubc2-bre1 complex to form H2BK123ub1. H2BK123ub1 gives a specific tag for epigenetic transcriptional activation and is also prerequisite for H3K4me and H3K79me formation. H2BK123ub1 also modulates the formation of double-strand breaks during meiosis and is a prerequisite for DNA-damage checkpoint activation. Acetylated by gcn5 to form H2BK11ac and H2BK16ac. H2BK16ac can also be formed by esa1. Acetylation of N-terminal lysines and particularly formation of H2BK11acK16ac has a positive effect on transcription. In terms of processing, sumoylation to form H2BK6su or H2BK7su, and probably also H2BK16su or H2BK17su, occurs preferentially near the telomeres and represses gene transcription.

It is found in the nucleus. The protein localises to the chromosome. Functionally, core component of nucleosome. Nucleosomes wrap and compact DNA into chromatin, limiting DNA accessibility to the cellular machineries which require DNA as a template. Histones thereby play a central role in transcription regulation, DNA repair, DNA replication and chromosomal stability. DNA accessibility is regulated via a complex set of post-translational modifications of histones, also called histone code, and nucleosome remodeling. This Neosartorya fischeri (strain ATCC 1020 / DSM 3700 / CBS 544.65 / FGSC A1164 / JCM 1740 / NRRL 181 / WB 181) (Aspergillus fischerianus) protein is Histone H2B (htb1).